We begin with the raw amino-acid sequence, 476 residues long: ATP synthase subunit beta (476 aa).

ATP is bound at residue 154 to 161 (GGAGVGKT).

The protein belongs to the ATPase alpha/beta chains family. F-type ATPases have 2 components, CF(1) - the catalytic core - and CF(0) - the membrane proton channel. CF(1) has five subunits: alpha(3), beta(3), gamma(1), delta(1), epsilon(1). CF(0) has four main subunits: a(1), b(1), b'(1) and c(9-12).

Its subcellular location is the cell inner membrane. It catalyses the reaction ATP + H2O + 4 H(+)(in) = ADP + phosphate + 5 H(+)(out). Its function is as follows. Produces ATP from ADP in the presence of a proton gradient across the membrane. The catalytic sites are hosted primarily by the beta subunits. The protein is ATP synthase subunit beta of Rhodopseudomonas palustris (strain BisA53).